A 262-amino-acid polypeptide reads, in one-letter code: Purine nucleoside phosphorylase SSP1584 (262 aa).

3 residues coordinate Zn(2+): His79, Cys124, and His141.

It belongs to the purine nucleoside phosphorylase YfiH/LACC1 family. Homodimer. The cofactor is Cu(2+). Zn(2+) serves as cofactor.

The enzyme catalyses adenosine + phosphate = alpha-D-ribose 1-phosphate + adenine. It catalyses the reaction S-methyl-5'-thioadenosine + phosphate = 5-(methylsulfanyl)-alpha-D-ribose 1-phosphate + adenine. The catalysed reaction is inosine + phosphate = alpha-D-ribose 1-phosphate + hypoxanthine. It carries out the reaction adenosine + H2O + H(+) = inosine + NH4(+). Purine nucleoside enzyme that catalyzes the phosphorolysis of adenosine and inosine nucleosides, yielding D-ribose 1-phosphate and the respective free bases, adenine and hypoxanthine. Also catalyzes the phosphorolysis of S-methyl-5'-thioadenosine into adenine and S-methyl-5-thio-alpha-D-ribose 1-phosphate. Also has adenosine deaminase activity. This chain is Purine nucleoside phosphorylase SSP1584, found in Staphylococcus saprophyticus subsp. saprophyticus (strain ATCC 15305 / DSM 20229 / NCIMB 8711 / NCTC 7292 / S-41).